Reading from the N-terminus, the 617-residue chain is DNA double-strand break repair protein Mre11 (617 aa).

Mn(2+)-binding residues include D12, H14, D53, and N88. Catalysis depends on H89, which acts as the Proton donor. Mn(2+) contacts are provided by H158, D189, and H191. Low complexity predominate over residues 395–432 (SPVDPSSSVSSIESSGSVSPIDSVSTVSPSSPSSSAII). Disordered stretches follow at residues 395–437 (SPVD…EPEE) and 513–617 (VEDE…GDYL). Polar residues predominate over residues 529–547 (APQSSSPVSFSDNSQTGFS). Residues 549–559 (ISPPESIPSPE) are compositionally biased toward low complexity. Residues 560–583 (ILKENSEADADEKPVDGKLSEEKP) are compositionally biased toward basic and acidic residues.

The protein belongs to the MRE11/RAD32 family. As to quaternary structure, homodimer. Forms a heterotetramer composed of two Mre11 subunits and two Rad50 subunits. Mn(2+) serves as cofactor.

With respect to regulation, nuclease activity is regulated by Rad50. Functionally, part of the Rad50/Mre11 complex, which is involved in the early steps of DNA double-strand break (DSB) repair. The complex may facilitate opening of the processed DNA ends to aid in the recruitment of HerA and NurA. Mre11 binds to DSB ends and has both double-stranded 3'-5' exonuclease activity and single-stranded endonuclease activity. The polypeptide is DNA double-strand break repair protein Mre11 (Methanosarcina mazei (strain ATCC BAA-159 / DSM 3647 / Goe1 / Go1 / JCM 11833 / OCM 88) (Methanosarcina frisia)).